Reading from the N-terminus, the 1074-residue chain is Probable arabinosyltransferase C (1074 aa).

The next 10 helical transmembrane spans lie at 15-37 (ARLV…PLLP), 214-236 (LLKL…ALHV), 251-273 (SRWW…WHFV), 415-437 (IIIG…ALLV), 452-474 (RFGY…FLIF), 516-538 (SVAR…AMTL), 573-595 (THQF…VAVT), 608-630 (FGAA…WYVS), 645-667 (FGFT…WFHF), and 684-706 (LLVA…SLTL).

Belongs to the emb family.

It is found in the cell membrane. Its function is as follows. Arabinosyl transferase responsible for the polymerization of arabinose into the arabinan of arabinogalactan. The polypeptide is Probable arabinosyltransferase C (embC) (Mycolicibacterium smegmatis (Mycobacterium smegmatis)).